The sequence spans 81 residues: Large ribosomal subunit protein bL31 (81 aa).

4 residues coordinate Zn(2+): Cys16, Cys18, Cys36, and Cys39.

Belongs to the bacterial ribosomal protein bL31 family. Type A subfamily. In terms of assembly, part of the 50S ribosomal subunit. It depends on Zn(2+) as a cofactor.

Binds the 23S rRNA. The chain is Large ribosomal subunit protein bL31 from Rhodopirellula baltica (strain DSM 10527 / NCIMB 13988 / SH1).